A 153-amino-acid chain; its full sequence is Large ribosomal subunit protein uL15 (153 aa).

Residues 1-48 are disordered; it reads MRLNELSPAPGSKKDRKRVGRGDAGRGNYSGRGMKGQKARSGGATRPG.

The protein belongs to the universal ribosomal protein uL15 family. Part of the 50S ribosomal subunit.

In terms of biological role, binds to the 23S rRNA. The protein is Large ribosomal subunit protein uL15 of Dehalococcoides mccartyi (strain ATCC BAA-2266 / KCTC 15142 / 195) (Dehalococcoides ethenogenes (strain 195)).